Consider the following 972-residue polypeptide: C-1-tetrahydrofolate synthase, mitochondrial (972 aa).

Residues 1-55 constitute a mitochondrion transit peptide; that stretch reads MNVMVSFNQLRNYFLESNSLRPSKWLFQSYGTSSSANILNGKLLARKLQRSVAEE. Residues 56 to 340 are methylenetetrahydrofolate dehydrogenase and cyclohydrolase; sequence VQALKAKDRN…DLNPLELKKP (285 aa). Substrate contacts are provided by residues 84–88 and 131–133; these read YVRMK and VQL. NADP(+) is bound by residues 202 to 204 and Ser227; that span reads GRS. 299–303 is a substrate binding site; sequence PGGVG. The segment at 341 to 972 is formyltetrahydrofolate synthetase; it reads VPSDIEIANS…CENGEIVGLS (632 aa). 405–412 is an ATP binding site; that stretch reads TPFGEGKS.

The protein in the N-terminal section; belongs to the tetrahydrofolate dehydrogenase/cyclohydrolase family. In the C-terminal section; belongs to the formate--tetrahydrofolate ligase family. In terms of assembly, homodimer.

The protein resides in the mitochondrion. The catalysed reaction is (6R)-5,10-methylene-5,6,7,8-tetrahydrofolate + NADP(+) = (6R)-5,10-methenyltetrahydrofolate + NADPH. It carries out the reaction (6R)-5,10-methenyltetrahydrofolate + H2O = (6R)-10-formyltetrahydrofolate + H(+). The enzyme catalyses (6S)-5,6,7,8-tetrahydrofolate + formate + ATP = (6R)-10-formyltetrahydrofolate + ADP + phosphate. It functions in the pathway one-carbon metabolism; tetrahydrofolate interconversion. Its function is as follows. Mitochondrial isozyme of C-1-tetrahydrofolate synthase. The trifunctional enzyme catalyzes the interconversion of the one-carbon derivatives of tetrahydrofolate (THF) between different oxidation states by the enzymatic activities 10-formyltetrahydrofolate synthetase, 5,lO-methenyltetrahydrofolate cyclohydrolase, and 5,lO-methylenetetrahydrofolate dehydrogenase. In Schizosaccharomyces pombe (strain 972 / ATCC 24843) (Fission yeast), this protein is C-1-tetrahydrofolate synthase, mitochondrial (ade9).